The sequence spans 451 residues: Probable multidrug resistance protein NorM (451 aa).

10 helical membrane-spanning segments follow: residues 44–66, 92–109, 130–147, 162–179, 186–208, 247–269, 282–304, 319–341, 391–413, and 423–445; these read IAAI…GLLL, YWLA…LWNS, YIRI…FQVI, VIGL…YTLI, FNYG…FIAM, GFPI…LLIA, ALNI…SIRL, IILS…IILF, IIFI…FLAL, and AIGF…LFRI.

Belongs to the multi antimicrobial extrusion (MATE) (TC 2.A.66.1) family.

The protein resides in the cell membrane. In terms of biological role, multidrug efflux pump. This chain is Probable multidrug resistance protein NorM (norM), found in Buchnera aphidicola subsp. Baizongia pistaciae (strain Bp).